Here is a 504-residue protein sequence, read N- to C-terminus: D-alanine--D-alanyl carrier protein ligase (504 aa).

152–153 (TS) serves as a coordination point for ATP. Aspartate 197 contacts D-alanine. 292 to 297 (NTYGPT) contributes to the ATP binding site. Valine 301 is a binding site for D-alanine. ATP contacts are provided by residues aspartate 383, 394 to 397 (YNGR), and lysine 492. Lysine 492 contributes to the D-alanine binding site.

Belongs to the ATP-dependent AMP-binding enzyme family. DltA subfamily.

The protein resides in the cytoplasm. The catalysed reaction is holo-[D-alanyl-carrier protein] + D-alanine + ATP = D-alanyl-[D-alanyl-carrier protein] + AMP + diphosphate. It functions in the pathway cell wall biogenesis; lipoteichoic acid biosynthesis. Its function is as follows. Catalyzes the first step in the D-alanylation of lipoteichoic acid (LTA), the activation of D-alanine and its transfer onto the D-alanyl carrier protein (Dcp) DltC. In an ATP-dependent two-step reaction, forms a high energy D-alanyl-AMP intermediate, followed by transfer of the D-alanyl residue as a thiol ester to the phosphopantheinyl prosthetic group of the Dcp. D-alanylation of LTA plays an important role in modulating the properties of the cell wall in Gram-positive bacteria, influencing the net charge of the cell wall. The protein is D-alanine--D-alanyl carrier protein ligase of Bacillus mycoides (strain KBAB4) (Bacillus weihenstephanensis).